The sequence spans 237 residues: Redox-sensing transcriptional repressor Rex (237 aa).

The H-T-H motif DNA-binding region spans 45–84; sequence LYYRELHRLLAAGESSTNSRDLGAMVNVSPAVVRRDLSSI. Residue 119 to 124 coordinates NAD(+); it reads GVGSLG.

This sequence belongs to the transcriptional regulatory Rex family. Homodimer.

It is found in the cytoplasm. Modulates transcription in response to changes in cellular NADH/NAD(+) redox state. This is Redox-sensing transcriptional repressor Rex from Rhodopirellula baltica (strain DSM 10527 / NCIMB 13988 / SH1).